The following is a 177-amino-acid chain: Large ribosomal subunit protein uL6 (177 aa).

It belongs to the universal ribosomal protein uL6 family. In terms of assembly, part of the 50S ribosomal subunit.

In terms of biological role, this protein binds to the 23S rRNA, and is important in its secondary structure. It is located near the subunit interface in the base of the L7/L12 stalk, and near the tRNA binding site of the peptidyltransferase center. The sequence is that of Large ribosomal subunit protein uL6 from Paracoccus denitrificans (strain Pd 1222).